Reading from the N-terminus, the 238-residue chain is Small ribosomal subunit protein uS2c (238 aa).

It belongs to the universal ribosomal protein uS2 family.

The protein resides in the plastid. The protein localises to the chloroplast. The protein is Small ribosomal subunit protein uS2c (rps2) of Nuphar advena (Common spatterdock).